The chain runs to 242 residues: tRNA1(Val) (adenine(37)-N6)-methyltransferase (242 aa).

Belongs to the methyltransferase superfamily. tRNA (adenine-N(6)-)-methyltransferase family.

The protein localises to the cytoplasm. The catalysed reaction is adenosine(37) in tRNA1(Val) + S-adenosyl-L-methionine = N(6)-methyladenosine(37) in tRNA1(Val) + S-adenosyl-L-homocysteine + H(+). Functionally, specifically methylates the adenine in position 37 of tRNA(1)(Val) (anticodon cmo5UAC). This Mannheimia succiniciproducens (strain KCTC 0769BP / MBEL55E) protein is tRNA1(Val) (adenine(37)-N6)-methyltransferase.